A 132-amino-acid chain; its full sequence is ATP synthase epsilon chain (132 aa).

The protein belongs to the ATPase epsilon chain family. F-type ATPases have 2 components, CF(1) - the catalytic core - and CF(0) - the membrane proton channel. CF(1) has five subunits: alpha(3), beta(3), gamma(1), delta(1), epsilon(1). CF(0) has three main subunits: a, b and c.

The protein localises to the cell membrane. In terms of biological role, produces ATP from ADP in the presence of a proton gradient across the membrane. The chain is ATP synthase epsilon chain from Desulfitobacterium hafniense (strain Y51).